The following is a 581-amino-acid chain: A-type ATP synthase subunit A (581 aa).

Residue 232 to 239 coordinates ATP; it reads GPFGSGKT.

Belongs to the ATPase alpha/beta chains family. As to quaternary structure, has multiple subunits with at least A(3), B(3), C, D, E, F, H, I and proteolipid K(x).

It localises to the cell membrane. The catalysed reaction is ATP + H2O + 4 H(+)(in) = ADP + phosphate + 5 H(+)(out). Its function is as follows. Component of the A-type ATP synthase that produces ATP from ADP in the presence of a proton gradient across the membrane. The A chain is the catalytic subunit. This is A-type ATP synthase subunit A from Methanocorpusculum labreanum (strain ATCC 43576 / DSM 4855 / Z).